Consider the following 159-residue polypeptide: Small ribosomal subunit protein uS13 (159 aa).

The segment at 136–159 is disordered; it reads QRTRSTGRSGATVGVTRKKTQAKK. Over residues 138 to 149 the composition is skewed to low complexity; the sequence is TRSTGRSGATVG.

This sequence belongs to the universal ribosomal protein uS13 family. Part of the 30S ribosomal subunit. Forms a loose heterodimer with protein S19. Forms two bridges to the 50S subunit in the 70S ribosome.

In terms of biological role, located at the top of the head of the 30S subunit, it contacts several helices of the 16S rRNA. In the 70S ribosome it contacts the 23S rRNA (bridge B1a) and protein L5 of the 50S subunit (bridge B1b), connecting the 2 subunits; these bridges are implicated in subunit movement. In Methanothrix thermoacetophila (strain DSM 6194 / JCM 14653 / NBRC 101360 / PT) (Methanosaeta thermophila), this protein is Small ribosomal subunit protein uS13.